Here is a 210-residue protein sequence, read N- to C-terminus: MNYDRIYSNLVNSAEHPSKPRQTKAGYELHHIIPRSMGGSDDLDNLVFLTYKAHYTAHHLLAKIYGGKMYDAYWIMSNSKHRKVTSSQYAYAKAKKFENQRGAKRSDKTKKLMSIARSKVTLPDDFGKRISDGLTGRTLSTNHKEHIKNSSRNRFNTKTVIGYSPDGNTIELTGATEIRNAGFFHSAVYKCCKGIQSIHKGYTWKYKDEL.

Residues 25–54 enclose the HNH domain; the sequence is AGYELHHIIPRSMGGSDDLDNLVFLTYKAH.

To phage T4 mobB and mobD.

The sequence is that of Probable mobile endonuclease C (mobC) from Escherichia coli (Bacteriophage T4).